A 65-amino-acid polypeptide reads, in one-letter code: MPKMKTNRSAAKRFRITKNGKIMRNHAYRSHKTGKKRRNTLRELRKKDVVSSTDKYRILRLLGKK.

Belongs to the bacterial ribosomal protein bL35 family.

The sequence is that of Large ribosomal subunit protein bL35 from Thermotoga petrophila (strain ATCC BAA-488 / DSM 13995 / JCM 10881 / RKU-1).